A 212-amino-acid chain; its full sequence is Small ribosomal subunit protein uS3 (212 aa).

Residues isoleucine 39–arginine 108 form the KH type-2 domain.

It belongs to the universal ribosomal protein uS3 family. As to quaternary structure, part of the 30S ribosomal subunit. Forms a tight complex with proteins S10 and S14.

Its function is as follows. Binds the lower part of the 30S subunit head. Binds mRNA in the 70S ribosome, positioning it for translation. This chain is Small ribosomal subunit protein uS3, found in Aquifex aeolicus (strain VF5).